A 224-amino-acid chain; its full sequence is Probable GTP-binding protein EngB (224 aa).

Positions 31–205 constitute an EngB-type G domain; that stretch reads IGVEIAFAGR…LSILNDWCHP (175 aa). Residues 39 to 46, 66 to 70, 84 to 87, 151 to 154, and 184 to 186 each bind GTP; these read GRSNAGKS, GRTQL, DLPG, TKSD, and LSS. Residues Ser46 and Thr68 each contribute to the Mg(2+) site.

It belongs to the TRAFAC class TrmE-Era-EngA-EngB-Septin-like GTPase superfamily. EngB GTPase family. Mg(2+) is required as a cofactor.

Necessary for normal cell division and for the maintenance of normal septation. The protein is Probable GTP-binding protein EngB of Shewanella frigidimarina (strain NCIMB 400).